A 249-amino-acid chain; its full sequence is Demethylmenaquinone methyltransferase (249 aa).

S-adenosyl-L-methionine contacts are provided by residues Thr-67, Asp-87, and 115–116 (DA).

It belongs to the class I-like SAM-binding methyltransferase superfamily. MenG/UbiE family.

It catalyses the reaction a 2-demethylmenaquinol + S-adenosyl-L-methionine = a menaquinol + S-adenosyl-L-homocysteine + H(+). It functions in the pathway quinol/quinone metabolism; menaquinone biosynthesis; menaquinol from 1,4-dihydroxy-2-naphthoate: step 2/2. In terms of biological role, methyltransferase required for the conversion of demethylmenaquinol (DMKH2) to menaquinol (MKH2). In Leptospira interrogans serogroup Icterohaemorrhagiae serovar copenhageni (strain Fiocruz L1-130), this protein is Demethylmenaquinone methyltransferase.